Consider the following 275-residue polypeptide: Large ribosomal subunit protein uL2 (275 aa).

Residues 222–257 are disordered; the sequence is GTAMNAVDHPHGGGRGRSKGNNQPRSPWNQPAKGFK. The span at 240–250 shows a compositional bias: polar residues; sequence KGNNQPRSPWN.

The protein belongs to the universal ribosomal protein uL2 family. Part of the 50S ribosomal subunit. Forms a bridge to the 30S subunit in the 70S ribosome.

Its function is as follows. One of the primary rRNA binding proteins. Required for association of the 30S and 50S subunits to form the 70S ribosome, for tRNA binding and peptide bond formation. It has been suggested to have peptidyltransferase activity; this is somewhat controversial. Makes several contacts with the 16S rRNA in the 70S ribosome. The chain is Large ribosomal subunit protein uL2 from Endomicrobium trichonymphae.